Consider the following 97-residue polypeptide: MTKGTSSFGKRRNKTHTLCRRCGSKAYHLQKSTCGKCGYPAKRKRKYNWSAKAKRRNTTGTGRMRHLKIVYRRFRHGFREGTTPKPKRAAVAASSSS.

Residue K10 is modified to N6-acetyllysine. C19, C22, C34, and C37 together coordinate Zn(2+). The C4-type zinc finger occupies 19–37 (CRRCGSKAYHLQKSTCGKC). S96 and S97 each carry phosphoserine.

It belongs to the eukaryotic ribosomal protein eL37 family. As to quaternary structure, component of the large ribosomal subunit.

Its subcellular location is the cytoplasm. Its function is as follows. Component of the large ribosomal subunit. The ribosome is a large ribonucleoprotein complex responsible for the synthesis of proteins in the cell. This chain is Large ribosomal subunit protein eL37 (RPL37), found in Bos taurus (Bovine).